A 301-amino-acid chain; its full sequence is NDP-polyphosphate phosphotransferase 3 (301 aa).

Over residues 1 to 12 the composition is skewed to basic and acidic residues; that stretch reads MNRNGSTKDPRR. The interval 1 to 21 is disordered; that stretch reads MNRNGSTKDPRRMTGAATGEI.

This sequence belongs to the polyphosphate kinase 2 (PPK2) family. Class I subfamily. It depends on Mg(2+) as a cofactor.

The enzyme catalyses [phosphate](n) + ATP = [phosphate](n+1) + ADP. It catalyses the reaction [phosphate](n) + CTP = [phosphate](n+1) + CDP. The catalysed reaction is [phosphate](n) + GTP = [phosphate](n+1) + GDP. It carries out the reaction [phosphate](n) + UTP = [phosphate](n+1) + UDP. Functionally, uses inorganic polyphosphate (polyP) as a donor to convert NDP to NTP. PolyP hydrolysis is slightly faster with UDP, but it can also use ADP, GDP and CDP. This chain is NDP-polyphosphate phosphotransferase 3, found in Ruegeria pomeroyi (strain ATCC 700808 / DSM 15171 / DSS-3) (Silicibacter pomeroyi).